The sequence spans 361 residues: Phospho-N-acetylmuramoyl-pentapeptide-transferase (361 aa).

Transmembrane regions (helical) follow at residues 17-37 (SIYL…LFAG), 66-86 (GTPT…SIFI), 90-110 (TNSL…IGFI), 129-149 (LLFQ…IGLT), 162-182 (ISAY…QIVL), 197-217 (GLAI…AYFT), 232-252 (VGSG…LGFL), 261-281 (IFMG…IAII), 286-306 (LMLP…ILQV), and 340-360 (FWIG…MRGI).

The protein belongs to the glycosyltransferase 4 family. MraY subfamily. The cofactor is Mg(2+).

Its subcellular location is the cell inner membrane. It carries out the reaction UDP-N-acetyl-alpha-D-muramoyl-L-alanyl-gamma-D-glutamyl-meso-2,6-diaminopimeloyl-D-alanyl-D-alanine + di-trans,octa-cis-undecaprenyl phosphate = di-trans,octa-cis-undecaprenyl diphospho-N-acetyl-alpha-D-muramoyl-L-alanyl-D-glutamyl-meso-2,6-diaminopimeloyl-D-alanyl-D-alanine + UMP. It functions in the pathway cell wall biogenesis; peptidoglycan biosynthesis. Its function is as follows. Catalyzes the initial step of the lipid cycle reactions in the biosynthesis of the cell wall peptidoglycan: transfers peptidoglycan precursor phospho-MurNAc-pentapeptide from UDP-MurNAc-pentapeptide onto the lipid carrier undecaprenyl phosphate, yielding undecaprenyl-pyrophosphoryl-MurNAc-pentapeptide, known as lipid I. The protein is Phospho-N-acetylmuramoyl-pentapeptide-transferase of Fusobacterium nucleatum subsp. nucleatum (strain ATCC 25586 / DSM 15643 / BCRC 10681 / CIP 101130 / JCM 8532 / KCTC 2640 / LMG 13131 / VPI 4355).